A 549-amino-acid chain; its full sequence is Probable protein kinase UbiB (549 aa).

One can recognise a Protein kinase domain in the interval 123–501 (DFNETPLASA…QQQAHKSNYL (379 aa)). ATP-binding positions include 129-137 (LASASISQV) and K152. D287 functions as the Proton acceptor in the catalytic mechanism. A run of 2 helical transmembrane segments spans residues 498 to 518 (SNYL…LFNQ) and 520 to 540 (ATLW…IIGW).

Belongs to the ABC1 family. UbiB subfamily.

The protein localises to the cell inner membrane. Its pathway is cofactor biosynthesis; ubiquinone biosynthesis [regulation]. Is probably a protein kinase regulator of UbiI activity which is involved in aerobic coenzyme Q (ubiquinone) biosynthesis. In Shewanella sp. (strain MR-4), this protein is Probable protein kinase UbiB.